A 444-amino-acid chain; its full sequence is Ribulose bisphosphate carboxylase large chain (444 aa).

Lys-5 carries the post-translational modification N6,N6,N6-trimethyllysine. The substrate site is built by Asn-114 and Thr-164. The Proton acceptor role is filled by Lys-166. Residue Lys-168 coordinates substrate. The Mg(2+) site is built by Lys-192, Asp-194, and Glu-195. At Lys-192 the chain carries N6-carboxylysine. The active-site Proton acceptor is His-285. 3 residues coordinate substrate: Arg-286, His-318, and Ser-370.

This sequence belongs to the RuBisCO large chain family. Type I subfamily. As to quaternary structure, heterohexadecamer of 8 large chains and 8 small chains; disulfide-linked. The disulfide link is formed within the large subunit homodimers. Mg(2+) is required as a cofactor. Post-translationally, the disulfide bond which can form in the large chain dimeric partners within the hexadecamer appears to be associated with oxidative stress and protein turnover.

The protein localises to the plastid. It localises to the chloroplast. The catalysed reaction is 2 (2R)-3-phosphoglycerate + 2 H(+) = D-ribulose 1,5-bisphosphate + CO2 + H2O. It catalyses the reaction D-ribulose 1,5-bisphosphate + O2 = 2-phosphoglycolate + (2R)-3-phosphoglycerate + 2 H(+). RuBisCO catalyzes two reactions: the carboxylation of D-ribulose 1,5-bisphosphate, the primary event in carbon dioxide fixation, as well as the oxidative fragmentation of the pentose substrate in the photorespiration process. Both reactions occur simultaneously and in competition at the same active site. The polypeptide is Ribulose bisphosphate carboxylase large chain (Ginkgo biloba (Ginkgo)).